Here is a 185-residue protein sequence, read N- to C-terminus: Capsid protein (185 aa).

The segment at 136-185 is disordered; the sequence is NAPILSTLPETTVVRRRDRGRSPRRRTPSPRRRRSPSPRRRRSQSRESQC. Positions 149–178 are enriched in basic residues; it reads VRRRDRGRSPRRRTPSPRRRRSPSPRRRRS. Serine 157, serine 164, and serine 172 each carry phosphoserine; by host. A 1; half-length repeat occupies 157–163; that stretch reads SPRRRTP. The 3 X 8 AA repeats of S-P-R-R-R-[PR]-S-Q stretch occupies residues 157-179; sequence SPRRRTPSPRRRRSPSPRRRRSQ. The Bipartite nuclear localization signal signature appears at 160-177; that stretch reads RRTPSPRRRRSPSPRRRR. A run of 2 repeats spans residues 164–171 and 172–179. Residues 179 to 185 are RNA binding; it reads QSRESQC.

Belongs to the orthohepadnavirus core antigen family. In terms of assembly, homodimerizes, then multimerizes. Interacts with cytosol exposed regions of viral L glycoprotein present in the reticulum-to-Golgi compartment. Interacts with human FLNB. Phosphorylated form interacts with host importin alpha; this interaction depends on the exposure of the NLS, which itself depends upon genome maturation and/or phosphorylation of the capsid protein. Interacts with host NUP153. Phosphorylated by host SRPK1, SRPK2, and maybe protein kinase C or GAPDH. Phosphorylation is critical for pregenomic RNA packaging. Protein kinase C phosphorylation is stimulated by HBx protein and may play a role in transport of the viral genome to the nucleus at the late step during the viral replication cycle.

It is found in the virion. Its subcellular location is the host cytoplasm. Functionally, self assembles to form an icosahedral capsid. Most capsids appear to be large particles with an icosahedral symmetry of T=4 and consist of 240 copies of capsid protein, though a fraction forms smaller T=3 particles consisting of 180 capsid proteins. Entering capsids are transported along microtubules to the nucleus. Phosphorylation of the capsid is thought to induce exposure of nuclear localization signal in the C-terminal portion of the capsid protein that allows binding to the nuclear pore complex via the importin (karyopherin-) alpha and beta. Capsids are imported in intact form through the nuclear pore into the nuclear basket, where it probably binds NUP153. Only capsids that contain the mature viral genome can release the viral DNA and capsid protein into the nucleoplasm. Immature capsids get stuck in the basket. Capsids encapsulate the pre-genomic RNA and the P protein. Pre-genomic RNA is reverse-transcribed into DNA while the capsid is still in the cytoplasm. The capsid can then either be directed to the nucleus, providing more genomes for transcription, or bud through the endoplasmic reticulum to provide new virions. This chain is Capsid protein, found in Hepatitis B virus genotype A2 subtype adw2 (strain Rutter 1979) (HBV-A).